The chain runs to 488 residues: Acetyl-coenzyme A carboxylase carboxyl transferase subunit beta, chloroplastic (488 aa).

Residues 224–488 enclose the CoA carboxyltransferase N-terminal domain; sequence LWIQCDNCYG…FFPLNKNEIK (265 aa). 4 residues coordinate Zn(2+): Cys-228, Cys-231, Cys-244, and Cys-247. A C4-type zinc finger spans residues 228-247; the sequence is CDNCYGLMYKKVEMNVCEEC.

Belongs to the AccD/PCCB family. Acetyl-CoA carboxylase is a heterohexamer composed of biotin carboxyl carrier protein, biotin carboxylase and 2 subunits each of ACCase subunit alpha and ACCase plastid-coded subunit beta (accD). Requires Zn(2+) as cofactor.

It is found in the plastid. The protein localises to the chloroplast stroma. The enzyme catalyses N(6)-carboxybiotinyl-L-lysyl-[protein] + acetyl-CoA = N(6)-biotinyl-L-lysyl-[protein] + malonyl-CoA. It participates in lipid metabolism; malonyl-CoA biosynthesis; malonyl-CoA from acetyl-CoA: step 1/1. Functionally, component of the acetyl coenzyme A carboxylase (ACC) complex. Biotin carboxylase (BC) catalyzes the carboxylation of biotin on its carrier protein (BCCP) and then the CO(2) group is transferred by the transcarboxylase to acetyl-CoA to form malonyl-CoA. The chain is Acetyl-coenzyme A carboxylase carboxyl transferase subunit beta, chloroplastic from Arabis hirsuta (Hairy rock-cress).